We begin with the raw amino-acid sequence, 488 residues long: Malonate-semialdehyde dehydrogenase (488 aa).

Positions 150, 152, 176, 179, 180, 229, and 251 each coordinate NAD(+). The Nucleophile role is filled by Cys284. Glu382 is a binding site for NAD(+).

Belongs to the aldehyde dehydrogenase family. IolA subfamily. As to quaternary structure, homotetramer.

The catalysed reaction is 3-oxopropanoate + NAD(+) + CoA + H2O = hydrogencarbonate + acetyl-CoA + NADH + H(+). The enzyme catalyses 2-methyl-3-oxopropanoate + NAD(+) + CoA + H2O = propanoyl-CoA + hydrogencarbonate + NADH + H(+). The protein operates within polyol metabolism; myo-inositol degradation into acetyl-CoA; acetyl-CoA from myo-inositol: step 7/7. Catalyzes the oxidation of malonate semialdehyde (MSA) and methylmalonate semialdehyde (MMSA) into acetyl-CoA and propanoyl-CoA, respectively. Is involved in a myo-inositol catabolic pathway. Bicarbonate, and not CO2, is the end-product of the enzymatic reaction. In Listeria monocytogenes serotype 4b (strain F2365), this protein is Malonate-semialdehyde dehydrogenase.